A 394-amino-acid polypeptide reads, in one-letter code: Protein TsgA homolog (394 aa).

12 helical membrane passes run 11–31, 51–71, 76–96, 101–121, 135–155, 163–183, 205–225, 245–265, 273–293, 299–319, 333–353, and 362–382; these read WISF…GMVL, FLNA…EIVP, LIFG…SHSL, LCMF…TFLI, LFTD…AAAI, YWVY…ALCF, LGVA…LGFI, SVVG…SAIL, IVTA…NTTD, WIIM…ITLG, FILT…GPIV, and LATT…LGFV.

This sequence belongs to the major facilitator superfamily. TsgA family.

It is found in the cell inner membrane. This Erwinia tasmaniensis (strain DSM 17950 / CFBP 7177 / CIP 109463 / NCPPB 4357 / Et1/99) protein is Protein TsgA homolog.